The chain runs to 187 residues: Ribonuclease HII (187 aa).

In terms of domain architecture, RNase H type-2 spans 1-187 (MIILGIDEAG…YKPVQVLLNE (187 aa)). A divalent metal cation is bound by residues Asp7, Glu8, and Asp99.

The protein belongs to the RNase HII family. Requires Mn(2+) as cofactor. The cofactor is Mg(2+).

The protein localises to the cytoplasm. The catalysed reaction is Endonucleolytic cleavage to 5'-phosphomonoester.. Its function is as follows. Endonuclease that specifically degrades the RNA of RNA-DNA hybrids. This is Ribonuclease HII from Francisella tularensis subsp. holarctica (strain FTNF002-00 / FTA).